The sequence spans 632 residues: Armadillo repeat-containing X-linked protein 2 (632 aa).

At 1–6 the chain is on the mitochondrial intermembrane side; it reads MSRVRD. The mitochondrion outer membrane (MOM)-targeting sequence stretch occupies residues 1–6; that stretch reads MSRVRD. Residues 7 to 25 traverse the membrane as a helical; Signal-anchor segment; that stretch reads AGCVAAGIVIGAGAWYCVY. The mitochondrion outer membrane (MOM)-targeting sequence stretch occupies residues 26–40; that stretch reads KYTRGRDQTKKRMAK. Topologically, residues 26–632 are cytoplasmic; the sequence is KYTRGRDQTK…VKVIKLVNKF (607 aa). 3 disordered regions span residues 68 to 124, 160 to 304, and 335 to 369; these read GFSP…AGVG, APKV…KVEV, and VPDSEEGESGWTDTESDSDSEPETQRRGRGRRPVA. Low complexity-rich tracts occupy residues 86-120 and 211-241; these read EASALDTVGAEAVAPAASSAEAQSGAGSQAQEADG and VASPTEAAEAPVPATPTGAAAPTGAAESPGT. Positions 336–356 are enriched in acidic residues; sequence PDSEEGESGWTDTESDSDSEP. ARM repeat units lie at residues 376–416, 418–457, and 498–537; these read PYEI…NNAN, SCNQETIRKLGGLPIIANMINKTDPHIKEKALMAMNNLSE, and ITNDYQHLLVNSIANFFRLLSQGGGKIKVEILKILSNFAE.

Belongs to the eutherian X-chromosome-specific Armcx family. As to expression, expressed at high levels ovary, heart, testis, prostate, brain, spleen and colon. Expressed at very low levels in liver and thymus. Not expressed in peripheral blood leukocytes. Not expressed in pancreas and ovarian carcinomas.

It localises to the mitochondrion. Its subcellular location is the mitochondrion outer membrane. Its function is as follows. May regulate the dynamics and distribution of mitochondria in neural cells. This chain is Armadillo repeat-containing X-linked protein 2 (ARMCX2), found in Homo sapiens (Human).